Here is a 1408-residue protein sequence, read N- to C-terminus: DNA-directed RNA polymerase subunit beta' (1408 aa).

Zn(2+) contacts are provided by cysteine 70, cysteine 72, cysteine 85, and cysteine 88. 3 residues coordinate Mg(2+): aspartate 460, aspartate 462, and aspartate 464. Positions 814, 888, 895, and 898 each coordinate Zn(2+).

It belongs to the RNA polymerase beta' chain family. As to quaternary structure, the RNAP catalytic core consists of 2 alpha, 1 beta, 1 beta' and 1 omega subunit. When a sigma factor is associated with the core the holoenzyme is formed, which can initiate transcription. Mg(2+) is required as a cofactor. The cofactor is Zn(2+).

The enzyme catalyses RNA(n) + a ribonucleoside 5'-triphosphate = RNA(n+1) + diphosphate. Functionally, DNA-dependent RNA polymerase catalyzes the transcription of DNA into RNA using the four ribonucleoside triphosphates as substrates. The polypeptide is DNA-directed RNA polymerase subunit beta' (Shewanella frigidimarina (strain NCIMB 400)).